A 480-amino-acid polypeptide reads, in one-letter code: Cytochrome c oxidase subunit 1 (480 aa).

Residues 22–42 form a helical membrane-spanning segment; the sequence is ISYLWLAYWFGMIGFYMSVLI. Ca(2+) is bound by residues E45 and G50. The next 8 helical transmembrane spans lie at 64–84, 109–129, 151–171, 194–214, 240–260, 278–298, 309–329, and 343–363; these read LLFT…GLFG, SLLL…LEIG, LIIF…INFI, IVLT…VFLM, LFWF…FGII, MILA…HHMY, YFTT…FNWV, and LILF…TGVV. H69 is a Fe(II)-heme a binding site. A Cu cation-binding site is contributed by H246. The segment at residues 246 to 250 is a cross-link (1'-histidyl-3'-tyrosine (His-Tyr)); that stretch reads HPEVY. Residue Y250 coordinates O2. H295 and H296 together coordinate Cu cation. Mg(2+)-binding residues include H374 and D375. H382 provides a ligand contact to heme a3. 2 helical membrane-spanning segments follow: residues 382–402 and 416–436; these read HFHF…IVYI and LSLM…PMHF. H384 is a binding site for Fe(II)-heme a. P447 contacts Ca(2+). A helical membrane pass occupies residues 458 to 478; the sequence is FICTLGATMMLVLKLTVLFII.

It belongs to the heme-copper respiratory oxidase family. As to quaternary structure, component of the cytochrome c oxidase (complex IV, CIV), a multisubunit enzyme composed of a catalytic core of 3 subunits and several supernumerary subunits. The complex exists as a monomer or a dimer and forms supercomplexes (SCs) in the inner mitochondrial membrane with ubiquinol-cytochrome c oxidoreductase (cytochrome b-c1 complex, complex III, CIII). Heme is required as a cofactor. The cofactor is Cu cation.

It localises to the mitochondrion inner membrane. The catalysed reaction is 4 Fe(II)-[cytochrome c] + O2 + 8 H(+)(in) = 4 Fe(III)-[cytochrome c] + 2 H2O + 4 H(+)(out). It participates in energy metabolism; oxidative phosphorylation. Component of the cytochrome c oxidase, the last enzyme in the mitochondrial electron transport chain which drives oxidative phosphorylation. The respiratory chain contains 3 multisubunit complexes succinate dehydrogenase (complex II, CII), ubiquinol-cytochrome c oxidoreductase (cytochrome b-c1 complex, complex III, CIII) and cytochrome c oxidase (complex IV, CIV), that cooperate to transfer electrons derived from NADH and succinate to molecular oxygen, creating an electrochemical gradient over the inner membrane that drives transmembrane transport and the ATP synthase. Cytochrome c oxidase is the component of the respiratory chain that catalyzes the reduction of oxygen to water. Electrons originating from reduced cytochrome c in the intermembrane space (IMS) are transferred via the dinuclear copper A center (CU(A)) of subunit 2 and heme A of subunit 1 to the active site in subunit 1, a binuclear center (BNC) formed by heme A3 and copper B (CU(B)). The BNC reduces molecular oxygen to 2 water molecules using 4 electrons from cytochrome c in the IMS and 4 protons from the mitochondrial matrix. This chain is Cytochrome c oxidase subunit 1 (MT-CO1), found in Theileria annulata.